The sequence spans 188 residues: dCTP deaminase (188 aa).

DCTP-binding positions include 111–116 (KSTYAR), 135–137 (TLE), Q156, Y170, and Q180. Residue E137 is the Proton donor/acceptor of the active site.

The protein belongs to the dCTP deaminase family. Homotrimer.

It carries out the reaction dCTP + H2O + H(+) = dUTP + NH4(+). The protein operates within pyrimidine metabolism; dUMP biosynthesis; dUMP from dCTP (dUTP route): step 1/2. Its function is as follows. Catalyzes the deamination of dCTP to dUTP. In Francisella philomiragia subsp. philomiragia (strain ATCC 25017 / CCUG 19701 / FSC 153 / O#319-036), this protein is dCTP deaminase.